The primary structure comprises 263 residues: Nicotinamide riboside transporter PnuC (263 aa).

Over 1–40 (MQYGMDSFGLRGIPHQVFIKKKEGKIMSLAWWKRELFGGW) the chain is Cytoplasmic. Residues 41–61 (THFEAVWLLMFLGIQAVVFVF) form a helical membrane-spanning segment. Position 62 (N62) is a topological domain, periplasmic. Residues 63-83 (PDSWLASVAAVTGILCVVFVG) traverse the membrane as a helical segment. Residues 84-86 (KGK) lie on the Cytoplasmic side of the membrane. The helical transmembrane segment at 87–107 (ISNYLFGLISVSLYAYVSYTF) threads the bilayer. Residues 108–109 (KL) are Periplasmic-facing. The helical transmembrane segment at 110 to 131 (YGEMMLNLLVYVPVQFVGFAMW) threads the bilayer. Q124 serves as a coordination point for beta-nicotinamide D-riboside. Residues 132 to 155 (RKHMALGETAETEEVKAKALTVRQ) are Cytoplasmic-facing. Residues 156–177 (WLLVVAASVVGTSVYIEWLHHL) form a helical membrane-spanning segment. Over 178–180 (GSA) the chain is Periplasmic. Residues 181–201 (LPTLDGVTVVVSIVAQVLMIL) traverse the membrane as a helical segment. Q196 provides a ligand contact to beta-nicotinamide D-riboside. Over 202–205 (RYRE) the chain is Cytoplasmic. The helical transmembrane segment at 206-226 (QWALWIVVNILTISLWAVAWF) threads the bilayer. Residues W210 and N214 each contribute to the beta-nicotinamide D-riboside site. The Periplasmic segment spans residues 227–232 (KNGETS). A helical transmembrane segment spans residues 233–253 (LPLLLMYVMYLCNSVYGYINW). Y242 is a binding site for beta-nicotinamide D-riboside. Over 254 to 263 (TKLVKRHSGQ) the chain is Cytoplasmic.

It belongs to the nicotinamide ribonucleoside (NR) uptake permease (TC 4.B.1) family. Homotrimer.

The protein localises to the cell inner membrane. In terms of biological role, required for nicotinamide riboside transport across the inner membrane. This Neisseria mucosa (strain ATCC 25996 / DSM 4631 / NCTC 10774 / M26) protein is Nicotinamide riboside transporter PnuC.